Here is a 430-residue protein sequence, read N- to C-terminus: Adenylosuccinate synthetase (430 aa).

Residues G12–K18 and G40–T42 contribute to the GTP site. The active-site Proton acceptor is the D13. 2 residues coordinate Mg(2+): D13 and G40. IMP-binding positions include D13–K16, N38–H41, T128, R142, Q223, T238, and R302. H41 functions as the Proton donor in the catalytic mechanism. Residues S330–D332 and S412–G414 contribute to the GTP site.

The protein belongs to the adenylosuccinate synthetase family. Homodimer. Mg(2+) is required as a cofactor.

Its subcellular location is the cytoplasm. It carries out the reaction IMP + L-aspartate + GTP = N(6)-(1,2-dicarboxyethyl)-AMP + GDP + phosphate + 2 H(+). It participates in purine metabolism; AMP biosynthesis via de novo pathway; AMP from IMP: step 1/2. Plays an important role in the de novo pathway of purine nucleotide biosynthesis. Catalyzes the first committed step in the biosynthesis of AMP from IMP. In Bacillus subtilis (strain 168), this protein is Adenylosuccinate synthetase.